Reading from the N-terminus, the 329-residue chain is UDP-sugar transporter sqv-7 (329 aa).

Helical transmembrane passes span 15–34 (SAVF…KILL), 41–63 (SFLF…AKMF), 86–108 (YFFN…FTVL), 129–151 (SKAV…IYDL), 155–174 (ALGY…LGVY), 187–209 (YGLM…QYTG), 224–246 (TSSV…YSLV), 253–275 (SALT…GMFS), and 280–302 (VFQW…YTYV).

It belongs to the TPT transporter family. SLC35D subfamily.

It localises to the golgi apparatus membrane. Its function is as follows. Acts as a transporter of UDP-glucuronic acid (UDP-GlcA), UDP-N-acetylgalactosamine (UDP-GalNAc) and UDP-galactose (UDP-Gal) from the cytoplasm into the Golgi lumen. Involved in the biosynthesis of glycoconjugates that play a pivotal role in development. Involved in the synthesis of chondroitin sulfate and heparan sulfate proteoglycans. Required for embryonic development. Involved in vulva epithelium invagination and embryonic development. Involved in the directed migration of hermaphrodite-specific neurons. The polypeptide is UDP-sugar transporter sqv-7 (sqv-7) (Caenorhabditis elegans).